Here is a 545-residue protein sequence, read N- to C-terminus: RNA-directed RNA polymerase beta chain (545 aa).

Residues arginine 243–glycine 373 form the RdRp catalytic domain.

As to quaternary structure, part of the viral RNA-dependent RNA polymerase complex, the other subunits are probably the host ribosomal protein S1, EF-Tu and EF-Ts.

The catalysed reaction is RNA(n) + a ribonucleoside 5'-triphosphate = RNA(n+1) + diphosphate. Its function is as follows. This is the catalytic subunit of the viral RNA-dependent RNA polymerase complex. This complex is involved in viral RNA replication that produces (+)-stranded genomes via a complementary, (-)-stranded intermediate. The protein is RNA-directed RNA polymerase beta chain of Escherichia coli (Bacteriophage MS2).